Reading from the N-terminus, the 384-residue chain is Urea transporter 1 (384 aa).

A run of 5 helical transmembrane segments spans residues 61–81 (ISQV…AGLL), 85–105 (PWWA…ALLL), 111–131 (AIAA…MAVF), 138–158 (FWWL…FSSA), and 168–188 (LPVF…ATGH). N-linked (GlcNAc...) asparagine glycosylation occurs at Asn206. 4 helical membrane-spanning segments follow: residues 250–270 (LMCL…LSLA), 279–299 (GLWG…FMAL), 305–325 (LLAL…THLM), and 327–347 (AVHL…FLLL).

It belongs to the urea transporter family. In terms of assembly, homotrimer; each subunit contains a pore through which urea permeates. Identified in a complex with STOM. Expressed in brain, spleen, kidney, testis and lung, with highest levels in brain.

It localises to the cell membrane. Its subcellular location is the basolateral cell membrane. It carries out the reaction urea(in) = urea(out). In terms of biological role, mediates the transport of urea driven by a concentration gradient across the cell membrane. Mediates the transport of urea across the cell membranes of erythrocytes and the renal inner medullary collecting duct which is critical to the urinary concentrating mechanism. Facilitates water transport in erythrocytes. This is Urea transporter 1 (Slc14a1) from Rattus norvegicus (Rat).